Reading from the N-terminus, the 401-residue chain is Phosphoglycerate kinase (401 aa).

Substrate contacts are provided by residues 21 to 23 (DFN), Arg-36, 59 to 62 (HLGR), Arg-119, and Arg-160. Residues Lys-212, Glu-330, and 357-360 (GGDS) each bind ATP.

It belongs to the phosphoglycerate kinase family. In terms of assembly, monomer.

The protein resides in the cytoplasm. It catalyses the reaction (2R)-3-phosphoglycerate + ATP = (2R)-3-phospho-glyceroyl phosphate + ADP. It participates in carbohydrate degradation; glycolysis; pyruvate from D-glyceraldehyde 3-phosphate: step 2/5. In Limosilactobacillus reuteri subsp. reuteri (strain JCM 1112) (Lactobacillus reuteri), this protein is Phosphoglycerate kinase.